Reading from the N-terminus, the 597-residue chain is MVADNSTSDPHAPGPQLSVTDIVVITVYFALNVAVGIWSSCRASRNTVSGYFLAGRDMTWWPIGASLFGSSEGSGLFIGLAGSGAAGGLAVAGFDWNATYVLLALAWVFGAIYISSEIVTLAEYIQKRFGGQRIRMYLSVLSLLLSVFTKISLDLYAGALFVHICLGWNFYLSTILTLTITALYTITGGLVAVIYTDALQTLIMVVGAVILAIKAFHQIDGYGQMEAAYARAIPSRTVANTTCHLPRADAMHMFRDPYTGDLPWTGMTFGLTIMATWYWCTDQVIVQRSLSARNLNHAKAGSILASYLKMLPMGLMIMPGMISRALFPDEVGCVVPSECLRACGAEIGCSNIAYPKLVMELMPVGLRGLMIAVMMPALMSSLSSIFNSSSTLFTMDIWRRLRPCASERELLLVGRLVIVVLIGVSVAWIPVLQGSNGGQLFIYMQSVTSSLAPPVTAVFTLGIFWQRANEQGAFWGLLAGLAVGATRLVLEFLHPAPPCGAADTRPAVLSQLHYLHFAVALFVLTGAVAVGGSLLTPPPRRHQIENLTWWTLTRDLSLGAKAGDGQTPQRYTFWARVCGFNAILLMCVNIFFYAYFA.

The Extracellular segment spans residues Met1 to Gln16. N-linked (GlcNAc...) asparagine glycosylation occurs at Asn5. Residues Leu17–Ile37 form a helical membrane-spanning segment. Residues Trp38 to Gly73 lie on the Cytoplasmic side of the membrane. Ser49 carries the phosphoserine modification. A helical membrane pass occupies residues Ser74–Phe94. The Extracellular segment spans residues Asp95 to Tyr100. The chain crosses the membrane as a helical span at residues Val101–Leu121. Residues Ala122–Tyr137 are Cytoplasmic-facing. Residues Leu138 to Gly158 form a helical membrane-spanning segment. The Extracellular segment spans residues Ala159 to Tyr171. Residues Leu172 to Ile194 form a helical membrane-spanning segment. Topologically, residues Tyr195–Gln200 are cytoplasmic. Residues Thr201–Ile219 form a helical membrane-spanning segment. Topologically, residues Asp220–Thr265 are extracellular. A helical membrane pass occupies residues Gly266–Val286. The Cytoplasmic portion of the chain corresponds to Gln287–Gly301. Residues Ser302–Ile322 traverse the membrane as a helical segment. Residues Ser323 to Arg367 are Extracellular-facing. A helical membrane pass occupies residues Gly368–Ser390. The Cytoplasmic segment spans residues Thr391–Leu410. A helical transmembrane segment spans residues Leu411–Val431. Over Leu432–Met444 the chain is Extracellular. The helical transmembrane segment at Gln445–Trp465 threads the bilayer. Residues Gln466 to Gly472 lie on the Cytoplasmic side of the membrane. The helical transmembrane segment at Ala473 to Leu493 threads the bilayer. The Extracellular portion of the chain corresponds to His494–Tyr514. Residues Leu515 to Leu535 form a helical membrane-spanning segment. Residues Thr536–Arg576 are Cytoplasmic-facing. The helical transmembrane segment at Val577–Ala597 threads the bilayer.

It belongs to the sodium:solute symporter (SSF) (TC 2.A.21) family. In terms of tissue distribution, expressed only in kidney.

Its subcellular location is the apical cell membrane. It catalyses the reaction D-mannose(out) + Na(+)(out) = D-mannose(in) + Na(+)(in). The enzyme catalyses D-fructopyranose(out) + Na(+)(out) = D-fructopyranose(in) + Na(+)(in). Functionally, electrogenic Na+-coupled sugar symporter that actively transports D-mannose or D-fructose at the plasma membrane, with a Na+ to sugar coupling ratio of 1:1. Transporter activity is driven by a transmembrane Na+ electrochemical gradient set by the Na+/K+ pump. Exclusively recognizes sugar substrates having a pyranose ring with an axial hydroxyl group on carbon 2. Has likely evolved to enable renal reabsorption of D-mannose, an important constituent of oligosaccharide chains of glycoproteins. Contributes to dietary D-fructose reabsorption from glomerular filtrate across the brush border of the kidney. The chain is Sodium/mannose cotransporter SLC5A10 (SLC5A10) from Oryctolagus cuniculus (Rabbit).